The sequence spans 476 residues: Protein transport protein SEC61 subunit alpha (476 aa).

At Met-1–Leu-33 the chain is on the cytoplasmic side. A helical membrane pass occupies residues Met-34–Ile-54. Residues Val-55–Thr-76 are Lumenal-facing. The chain crosses the membrane as a helical span at residues Leu-77–Gly-97. The Cytoplasmic segment spans residues Thr-98–Lys-119. The helical transmembrane segment at Leu-120 to Gly-140 threads the bilayer. The Lumenal portion of the chain corresponds to Pro-141–Gly-146. Residues Ala-147 to Leu-167 traverse the membrane as a helical segment. Topologically, residues Asp-168–Asn-246 are cytoplasmic. Residues Leu-247 to Ile-267 form a helical membrane-spanning segment. Topologically, residues Pro-268–Thr-361 are lumenal. The chain crosses the membrane as a helical span at residues Ala-362 to Val-382. The Cytoplasmic segment spans residues Ser-383–Arg-415. Residues Ile-416 to Ala-434 form a helical membrane-spanning segment. Residues Ser-435–Ala-440 are Lumenal-facing. The helical transmembrane segment at Leu-441–Phe-458 threads the bilayer. Over Glu-459–Gly-476 the chain is Cytoplasmic.

Belongs to the SecY/SEC61-alpha family. As to quaternary structure, heterotrimeric complex composed of SEC61-alpha, SEC61-beta and SEC61-gamma.

It is found in the endoplasmic reticulum membrane. Its function is as follows. Appears to play a crucial role in the insertion of secretory and membrane polypeptides into the ER. It is required for assembly of membrane and secretory proteins and is essential for cell growth. It interacts with other membrane proteins required for protein translocation. Upon binding to SEC62/63 complex, secretory precursor polypeptides may engage SEC61 to begin membrane penetration event. A cycle of assembly and disassembly of SEC62/63 from SEC61 may govern the activity of the translocase. This is Protein transport protein SEC61 subunit alpha (sec-61) from Neurospora crassa (strain ATCC 24698 / 74-OR23-1A / CBS 708.71 / DSM 1257 / FGSC 987).